Consider the following 838-residue polypeptide: Extragenic suppressor of kinetochore protein 1 (838 aa).

Phosphoserine occurs at positions 411 and 418. The segment at 411–468 is disordered; that stretch reads SDEDDDDSTFSDKNSKDFKETEDMNGAEDMHGRAPQITKDNLNLTTTDSPMSEAEPVS. The residue at position 419 (Thr-419) is a Phosphothreonine. Residues 423–442 are compositionally biased toward basic and acidic residues; the sequence is KNSKDFKETEDMNGAEDMHG. Residues Ser-425, Ser-459, Ser-468, and Ser-491 each carry the phosphoserine modification. Over residues 448-460 the composition is skewed to polar residues; it reads TKDNLNLTTTDSP. Thr-493 is modified (phosphothreonine). Phosphoserine is present on Ser-494. The segment covering 690–700 has biased composition (acidic residues); the sequence is ELESNSSDDDV. Disordered regions lie at residues 690-745 and 757-838; these read ELES…DQDN and ISDN…NHGK. A phosphoserine mark is found at Ser-711 and Ser-713. The segment covering 714-723 has biased composition (acidic residues); sequence NDEDDGNDED. The span at 724-734 shows a compositional bias: basic and acidic residues; it reads PLSREMSRRLS. 2 stretches are compositionally biased toward acidic residues: residues 768-779 and 806-818; these read SDEDDDDDDEVV and SDSE…DSSD.

Belongs to the SAPS family. As to quaternary structure, interacts with ppe1 and mis12.

Its subcellular location is the nucleus. Has a role in chromosome segregation. May provide a dynamic connection between kinetochore microtubules and kinetochore chromatin. The polypeptide is Extragenic suppressor of kinetochore protein 1 (ekc1) (Schizosaccharomyces pombe (strain 972 / ATCC 24843) (Fission yeast)).